The sequence spans 375 residues: tRNA-specific 2-thiouridylase MnmA (375 aa).

ATP-binding positions include 12-19 (GMSGGVDS) and Met-38. The interval 98 to 100 (NPD) is interaction with target base in tRNA. Catalysis depends on Cys-103, which acts as the Nucleophile. An intrachain disulfide couples Cys-103 to Cys-200. Gly-127 provides a ligand contact to ATP. The tract at residues 150–152 (KDQ) is interaction with tRNA. The active-site Cysteine persulfide intermediate is the Cys-200. An interaction with tRNA region spans residues 312-313 (RY).

It belongs to the MnmA/TRMU family.

It is found in the cytoplasm. The enzyme catalyses S-sulfanyl-L-cysteinyl-[protein] + uridine(34) in tRNA + AH2 + ATP = 2-thiouridine(34) in tRNA + L-cysteinyl-[protein] + A + AMP + diphosphate + H(+). In terms of biological role, catalyzes the 2-thiolation of uridine at the wobble position (U34) of tRNA, leading to the formation of s(2)U34. The sequence is that of tRNA-specific 2-thiouridylase MnmA from Lactobacillus helveticus (strain DPC 4571).